The sequence spans 140 residues: Acyl-coenzyme A thioesterase 13 (140 aa).

At Met-1 the chain carries N-acetylmethionine. An N6-acetyllysine mark is found at Lys-27, Lys-37, and Lys-43. Glu-46 contacts CoA. 2 residues coordinate substrate: Asn-50 and Gly-81. CoA-binding positions include Ser-83, 90-95 (YMSPAK), and 108-113 (KQGKTL). N6-acetyllysine is present on residues Lys-108 and Lys-127. His-137 contacts CoA.

Belongs to the thioesterase PaaI family. Homotetramer. Interacts with PCTP. Highly expressed in the kidney and moderately in the heart, liver, brain, small and large intestine. Also expressed in brown adipose tissue.

The protein localises to the cytoplasm. It localises to the cytosol. The protein resides in the mitochondrion. It is found in the nucleus. Its subcellular location is the cytoskeleton. The protein localises to the spindle. The enzyme catalyses a fatty acyl-CoA + H2O = a fatty acid + CoA + H(+). The catalysed reaction is decanoyl-CoA + H2O = decanoate + CoA + H(+). It catalyses the reaction octanoyl-CoA + H2O = octanoate + CoA + H(+). It carries out the reaction butanoyl-CoA + H2O = butanoate + CoA + H(+). The enzyme catalyses hexanoyl-CoA + H2O = hexanoate + CoA + H(+). The catalysed reaction is tetradecanoyl-CoA + H2O = tetradecanoate + CoA + H(+). It catalyses the reaction hexadecanoyl-CoA + H2O = hexadecanoate + CoA + H(+). It carries out the reaction dodecanoyl-CoA + H2O = dodecanoate + CoA + H(+). The enzyme catalyses (9Z)-octadecenoyl-CoA + H2O = (9Z)-octadecenoate + CoA + H(+). Its function is as follows. Catalyzes the hydrolysis of acyl-CoAs into free fatty acids and coenzyme A (CoASH), regulating their respective intracellular levels. Has acyl-CoA thioesterase activity towards medium (C12) and long-chain (C18) fatty acyl-CoA substrates. Can also hydrolyze 3-hydroxyphenylacetyl-CoA and 3,4-dihydroxyphenylacetyl-CoA (in vitro). May play a role in controlling adaptive thermogenesis. This chain is Acyl-coenzyme A thioesterase 13, found in Mus musculus (Mouse).